The primary structure comprises 501 residues: Lysine--tRNA ligase (501 aa).

Glu404 and Glu411 together coordinate Mg(2+).

Belongs to the class-II aminoacyl-tRNA synthetase family. In terms of assembly, homodimer. Requires Mg(2+) as cofactor.

Its subcellular location is the cytoplasm. It carries out the reaction tRNA(Lys) + L-lysine + ATP = L-lysyl-tRNA(Lys) + AMP + diphosphate. In Campylobacter jejuni subsp. jejuni serotype O:6 (strain 81116 / NCTC 11828), this protein is Lysine--tRNA ligase.